Reading from the N-terminus, the 95-residue chain is Glutamyl-tRNA(Gln) amidotransferase subunit C (95 aa).

It belongs to the GatC family. In terms of assembly, heterotrimer of A, B and C subunits.

The catalysed reaction is L-glutamyl-tRNA(Gln) + L-glutamine + ATP + H2O = L-glutaminyl-tRNA(Gln) + L-glutamate + ADP + phosphate + H(+). The enzyme catalyses L-aspartyl-tRNA(Asn) + L-glutamine + ATP + H2O = L-asparaginyl-tRNA(Asn) + L-glutamate + ADP + phosphate + 2 H(+). Allows the formation of correctly charged Asn-tRNA(Asn) or Gln-tRNA(Gln) through the transamidation of misacylated Asp-tRNA(Asn) or Glu-tRNA(Gln) in organisms which lack either or both of asparaginyl-tRNA or glutaminyl-tRNA synthetases. The reaction takes place in the presence of glutamine and ATP through an activated phospho-Asp-tRNA(Asn) or phospho-Glu-tRNA(Gln). The chain is Glutamyl-tRNA(Gln) amidotransferase subunit C from Moraxella catarrhalis (Branhamella catarrhalis).